The sequence spans 417 residues: Serine hydroxymethyltransferase 1 (417 aa).

(6S)-5,6,7,8-tetrahydrofolate is bound by residues Leu-121 and 125 to 127 (GHL). The residue at position 229 (Lys-229) is an N6-(pyridoxal phosphate)lysine. 354–356 (SPF) provides a ligand contact to (6S)-5,6,7,8-tetrahydrofolate.

The protein belongs to the SHMT family. As to quaternary structure, homodimer. Pyridoxal 5'-phosphate serves as cofactor.

It is found in the cytoplasm. It carries out the reaction (6R)-5,10-methylene-5,6,7,8-tetrahydrofolate + glycine + H2O = (6S)-5,6,7,8-tetrahydrofolate + L-serine. Its pathway is one-carbon metabolism; tetrahydrofolate interconversion. It participates in amino-acid biosynthesis; glycine biosynthesis; glycine from L-serine: step 1/1. In terms of biological role, catalyzes the reversible interconversion of serine and glycine with tetrahydrofolate (THF) serving as the one-carbon carrier. This reaction serves as the major source of one-carbon groups required for the biosynthesis of purines, thymidylate, methionine, and other important biomolecules. Also exhibits THF-independent aldolase activity toward beta-hydroxyamino acids, producing glycine and aldehydes, via a retro-aldol mechanism. This Pseudomonas savastanoi pv. phaseolicola (strain 1448A / Race 6) (Pseudomonas syringae pv. phaseolicola (strain 1448A / Race 6)) protein is Serine hydroxymethyltransferase 1.